A 284-amino-acid polypeptide reads, in one-letter code: 4-hydroxybenzoate octaprenyltransferase (284 aa).

A run of 7 helical transmembrane segments spans residues 13–32 (FNRPIGSFLLMWPTLWALWL), 90–110 (ALMLFCALSILSFILVLFTDL), 112–132 (TILLSFVGLGLAALYPFMKRY), 134–154 (HLPQLFLGLAFSWAIPMAYSA), 164–184 (LWMLFVANCFWTIAYDTYYAM), 200–220 (ILFGQYDLFVIICLQGLTLSL), and 224–244 (IGLLAGLHWLYFVSLIVCVGL).

Belongs to the UbiA prenyltransferase family. Mg(2+) is required as a cofactor.

It localises to the cell inner membrane. It catalyses the reaction all-trans-octaprenyl diphosphate + 4-hydroxybenzoate = 4-hydroxy-3-(all-trans-octaprenyl)benzoate + diphosphate. The protein operates within cofactor biosynthesis; ubiquinone biosynthesis. In terms of biological role, catalyzes the prenylation of para-hydroxybenzoate (PHB) with an all-trans polyprenyl group. Mediates the second step in the final reaction sequence of ubiquinone-8 (UQ-8) biosynthesis, which is the condensation of the polyisoprenoid side chain with PHB, generating the first membrane-bound Q intermediate 3-octaprenyl-4-hydroxybenzoate. The polypeptide is 4-hydroxybenzoate octaprenyltransferase (Marinomonas sp. (strain MWYL1)).